A 572-amino-acid polypeptide reads, in one-letter code: Pentatricopeptide repeat-containing protein At5g15010, mitochondrial (572 aa).

Residues 1 to 57 (MRGIFLIRSRLSIFRAPAVKCLRFSNVLPSLSNNCIVRLYMEPPVACVLPLGLCSMF) constitute a mitochondrion transit peptide. PPR repeat units follow at residues 160 to 194 (SVRE…SPSL), 196 to 230 (NSQT…KLEM), 231 to 261 (GIDD…NKDK), 265 to 300 (DAKS…GVKH), 301 to 335 (DVVS…CIEP), 336 to 371 (DRKV…GIEP), 372 to 406 (NVVT…GLFP), 412 to 438 (HAFM…GCEP), 439 to 473 (TVET…TVGP), and 474 to 508 (DLSS…GMRP).

This sequence belongs to the PPR family. P subfamily.

It is found in the mitochondrion. This chain is Pentatricopeptide repeat-containing protein At5g15010, mitochondrial, found in Arabidopsis thaliana (Mouse-ear cress).